Consider the following 342-residue polypeptide: MAHVGAVVAAMAGLMAILLHSSIHKIEEGHLAVYYRGGALLTSPNGPGYHIMLPFITSYRSVQTTLQTDEIKNVPCGTSGGVMIYFDRIEVVNMLIPTSVVDIVRNYTADYDKTLIFNKIHHELNQFCSVHTLQEVYIELFDIIDENLKTALQKDLNCMAPGLTIQAVRVTKPKIPEAIRRNYELMEAEKTRLLITVQTQKVVEKEAETERKKAIIEAQKVAQVAEIQFQQKVMEKETEKKISEIEDAAFLAREKARADAEYYTAAKFAEANTLKLTPEYLQLMKYQAIAANSKIYFGQDIPNMFVDSSASRPAAGESEQLESLSMRESLKKASKPKASEGH.

Residues 1-6 (MAHVGA) lie on the Cytoplasmic side of the membrane. A helical transmembrane segment spans residues 7–23 (VVAAMAGLMAILLHSSI). The Lumenal portion of the chain corresponds to 24–342 (HKIEEGHLAV…ASKPKASEGH (319 aa)). Asparagine 106 carries an N-linked (GlcNAc...) asparagine glycan. Positions 308–342 (SSASRPAAGESEQLESLSMRESLKKASKPKASEGH) are disordered.

It belongs to the band 7/mec-2 family.

The protein resides in the endoplasmic reticulum membrane. Its function is as follows. Mediates the endoplasmic reticulum-associated degradation (ERAD) of inositol 1,4,5-trisphosphate receptors (IP3Rs). Involved in regulation of cellular cholesterol homeostasis by regulation the SREBP signaling pathway. Binds cholesterol and may promote ER retention of the SCAP-SREBF complex. The protein is Erlin-1 of Danio rerio (Zebrafish).